Consider the following 207-residue polypeptide: Outer-membrane lipoprotein LolB (207 aa).

The signal sequence occupies residues 1–21 (MPIRKVSLLRLIPLASLVLAA). A lipid anchor (N-palmitoyl cysteine) is attached at Cys-22. A lipid anchor (S-diacylglycerol cysteine) is attached at Cys-22.

It belongs to the LolB family. As to quaternary structure, monomer.

Its subcellular location is the cell outer membrane. Functionally, plays a critical role in the incorporation of lipoproteins in the outer membrane after they are released by the LolA protein. The chain is Outer-membrane lipoprotein LolB from Serratia proteamaculans (strain 568).